We begin with the raw amino-acid sequence, 602 residues long: Arp2/3 complex-activating protein rickA (602 aa).

Disordered regions lie at residues 307-484 (SSLA…AGPK), 516-535 (VEFDPNTGKPVAHSHSKPVQ), and 555-602 (MSDS…SFVK). Positions 318-442 (TPPPPLPGNN…IPPPPPPPMA (125 aa)) are enriched in pro residues. WH2 domains lie at 472–489 (DTSDLMREIAGPKKLRKV) and 499–516 (SRDLLLQSIRGEHKLKKV). The segment covering 475–484 (DLMREIAGPK) has biased composition (basic and acidic residues). Residues 537-570 (VNKLSGVASILARRVVMEMSDSSGSESDSGNWSD) form a central and acidic domains region. The span at 555-566 (MSDSSGSESDSG) shows a compositional bias: low complexity. Residues 578-590 (KTLKTKRERRKIL) show a composition bias toward basic residues. A compositionally biased stretch (polar residues) spans 591-602 (NNRNSQKPSFVK).

As to quaternary structure, homodimer.

The protein resides in the cell surface. Its function is as follows. Recruits and activates the Arp2/3 complex, which in turn leads to actin polymerization, promoting Rickettsia motility during infection. The polypeptide is Arp2/3 complex-activating protein rickA (rickA) (Rickettsia montanensis).